The sequence spans 158 residues: NAD(P)H-quinone oxidoreductase subunit N (158 aa).

The protein belongs to the complex I NdhN subunit family. NDH-1 can be composed of about 15 different subunits; different subcomplexes with different compositions have been identified which probably have different functions.

It localises to the cellular thylakoid membrane. It carries out the reaction a plastoquinone + NADH + (n+1) H(+)(in) = a plastoquinol + NAD(+) + n H(+)(out). It catalyses the reaction a plastoquinone + NADPH + (n+1) H(+)(in) = a plastoquinol + NADP(+) + n H(+)(out). Its function is as follows. NDH-1 shuttles electrons from an unknown electron donor, via FMN and iron-sulfur (Fe-S) centers, to quinones in the respiratory and/or the photosynthetic chain. The immediate electron acceptor for the enzyme in this species is believed to be plastoquinone. Couples the redox reaction to proton translocation, and thus conserves the redox energy in a proton gradient. Cyanobacterial NDH-1 also plays a role in inorganic carbon-concentration. The chain is NAD(P)H-quinone oxidoreductase subunit N from Synechococcus elongatus (strain ATCC 33912 / PCC 7942 / FACHB-805) (Anacystis nidulans R2).